The following is a 131-amino-acid chain: Phosphoribosyl-AMP cyclohydrolase (131 aa).

Aspartate 74 provides a ligand contact to Mg(2+). Cysteine 75 provides a ligand contact to Zn(2+). Mg(2+) contacts are provided by aspartate 76 and aspartate 78. Cysteine 91 and cysteine 98 together coordinate Zn(2+).

This sequence belongs to the PRA-CH family. Homodimer. Mg(2+) is required as a cofactor. Requires Zn(2+) as cofactor.

The protein localises to the cytoplasm. It carries out the reaction 1-(5-phospho-beta-D-ribosyl)-5'-AMP + H2O = 1-(5-phospho-beta-D-ribosyl)-5-[(5-phospho-beta-D-ribosylamino)methylideneamino]imidazole-4-carboxamide. It participates in amino-acid biosynthesis; L-histidine biosynthesis; L-histidine from 5-phospho-alpha-D-ribose 1-diphosphate: step 3/9. In terms of biological role, catalyzes the hydrolysis of the adenine ring of phosphoribosyl-AMP. This Bradyrhizobium sp. (strain BTAi1 / ATCC BAA-1182) protein is Phosphoribosyl-AMP cyclohydrolase.